The chain runs to 505 residues: Histidine ammonia-lyase (505 aa).

The segment at residues 141-143 (ASG) is a cross-link (5-imidazolinone (Ala-Gly)). Position 142 is a 2,3-didehydroalanine (Ser) (S142).

The protein belongs to the PAL/histidase family. Contains an active site 4-methylidene-imidazol-5-one (MIO), which is formed autocatalytically by cyclization and dehydration of residues Ala-Ser-Gly.

The protein localises to the cytoplasm. It catalyses the reaction L-histidine = trans-urocanate + NH4(+). Its pathway is amino-acid degradation; L-histidine degradation into L-glutamate; N-formimidoyl-L-glutamate from L-histidine: step 1/3. This Bacillus cereus (strain ZK / E33L) protein is Histidine ammonia-lyase.